The primary structure comprises 254 residues: 5'-nucleotidase SurE (254 aa).

Aspartate 8, aspartate 9, serine 38, and asparagine 91 together coordinate a divalent metal cation.

This sequence belongs to the SurE nucleotidase family. The cofactor is a divalent metal cation.

The protein localises to the cytoplasm. It carries out the reaction a ribonucleoside 5'-phosphate + H2O = a ribonucleoside + phosphate. Nucleotidase that shows phosphatase activity on nucleoside 5'-monophosphates. In Anaeromyxobacter sp. (strain K), this protein is 5'-nucleotidase SurE.